We begin with the raw amino-acid sequence, 292 residues long: uncharacterized protein (292 aa).

5 helical membrane-spanning segments follow: residues 57 to 77 (IISL…LTLI), 101 to 121 (VYVF…FNFM), 143 to 163 (LIYA…AVLI), 184 to 204 (VVIT…NFVL), and 271 to 291 (IAFL…DRGI).

Belongs to the CbiQ family.

The protein resides in the cell membrane. This is an uncharacterized protein from Methanocaldococcus jannaschii (strain ATCC 43067 / DSM 2661 / JAL-1 / JCM 10045 / NBRC 100440) (Methanococcus jannaschii).